Consider the following 142-residue polypeptide: Small ribosomal subunit protein uS12 (142 aa).

Belongs to the universal ribosomal protein uS12 family. In terms of assembly, part of the 30S ribosomal subunit.

With S4 and S5 plays an important role in translational accuracy. Located at the interface of the 30S and 50S subunits. The polypeptide is Small ribosomal subunit protein uS12 (Methanocorpusculum labreanum (strain ATCC 43576 / DSM 4855 / Z)).